Here is a 432-residue protein sequence, read N- to C-terminus: Glutamyl-tRNA reductase (432 aa).

Substrate-binding positions include 49–52 (TCNR), Ser101, 106–108 (EPQ), and Gln112. Cys50 acts as the Nucleophile in catalysis. Residue 181–186 (GAGETI) coordinates NADP(+). Residues 408–432 (PEKPGYRHPPVATPIVRTDDANPAP) form a disordered region.

The protein belongs to the glutamyl-tRNA reductase family. As to quaternary structure, homodimer.

The catalysed reaction is (S)-4-amino-5-oxopentanoate + tRNA(Glu) + NADP(+) = L-glutamyl-tRNA(Glu) + NADPH + H(+). The protein operates within porphyrin-containing compound metabolism; protoporphyrin-IX biosynthesis; 5-aminolevulinate from L-glutamyl-tRNA(Glu): step 1/2. Catalyzes the NADPH-dependent reduction of glutamyl-tRNA(Glu) to glutamate 1-semialdehyde (GSA). This Xanthomonas campestris pv. campestris (strain 8004) protein is Glutamyl-tRNA reductase.